A 635-amino-acid polypeptide reads, in one-letter code: UvrABC system protein C (635 aa).

Over residues 1–14 (MAQNHMSETMNDIS) the composition is skewed to polar residues. Residues 1 to 27 (MAQNHMSETMNDISAESPDQPEPPRTG) are disordered. One can recognise a GIY-YIG domain in the interval 40–117 (SSPGVYRMLD…IKQLKPKYNV (78 aa)). Residues 227–262 (TKIQEELGAEMQAASEAMEYERAAALRDRIKALTQV) enclose the UVR domain.

It belongs to the UvrC family. As to quaternary structure, interacts with UvrB in an incision complex.

It localises to the cytoplasm. In terms of biological role, the UvrABC repair system catalyzes the recognition and processing of DNA lesions. UvrC both incises the 5' and 3' sides of the lesion. The N-terminal half is responsible for the 3' incision and the C-terminal half is responsible for the 5' incision. This Ruegeria sp. (strain TM1040) (Silicibacter sp.) protein is UvrABC system protein C.